Reading from the N-terminus, the 357-residue chain is Glucose-6-phosphatase catalytic subunit 1 (357 aa).

Residues 1 to 28 (MEEGMNILHDFGIQSTRYLQVNYQDSQD) lie on the Lumenal side of the membrane. A helical membrane pass occupies residues 29–49 (WFILVSVIADLRNAFYVLFPI). Topologically, residues 50-60 (WFHLKETVGIN) are cytoplasmic. Residues 61-81 (LLWVAVVGDWFNLVFKWILFG) traverse the membrane as a helical segment. Over 82–117 (QRPYWWVLDTDYYSNSSVPIIKQFPVTCETGPGSPS) the chain is Lumenal. Position 83 (R83) interacts with substrate. A glycan (N-linked (GlcNAc...) asparagine) is linked at N96. Residues 118 to 138 (GHAMGAAGVYYVMVTSTLAIF) traverse the membrane as a helical segment. H119 (proton donor) is an active-site residue. Over 139–147 (RGKKKPTYG) the chain is Cytoplasmic. A helical membrane pass occupies residues 148 to 168 (FRCLNVILWLGFWAVQLNVCL). The Lumenal portion of the chain corresponds to 169 to 179 (SRIYLAAHFPH). Residue R170 participates in substrate binding. The active-site Nucleophile is the H176. The chain crosses the membrane as a helical span at residues 180–202 (QVVAGVLSGIAVAETFSHIRGIY). Over 203–211 (NASLRKYCL) the chain is Cytoplasmic. A helical transmembrane segment spans residues 212–232 (ITIFLFGFALGFYLLLKGLGV). Residues 233-254 (DLLWTLEKAKRWCERPEWVHLD) are Lumenal-facing. The chain crosses the membrane as a helical span at residues 255–275 (TTPFASLFKNLGTLLGLGLAL). Residues 276–291 (NSSMYRKSCKGELSKL) lie on the Cytoplasmic side of the membrane. Residues 292 to 312 (LPFRFACIVASLVLLHLFDSL) form a helical membrane-spanning segment. Topologically, residues 313–320 (KPPSQVEL) are lumenal. A helical transmembrane segment spans residues 321-341 (IFYILSFCKSATVPFASVSLI). At 342-357 (PYCLARILGQTHKKSL) the chain is on the cytoplasmic side. The short motif at 354–357 (KKSL) is the Prevents secretion from ER element.

The protein belongs to the glucose-6-phosphatase family. Liver and kidney.

It localises to the endoplasmic reticulum membrane. It catalyses the reaction D-glucose 6-phosphate + H2O = D-glucose + phosphate. It participates in carbohydrate biosynthesis; gluconeogenesis. Its function is as follows. Hydrolyzes glucose-6-phosphate to glucose in the endoplasmic reticulum. Forms with the glucose-6-phosphate transporter (SLC37A4/G6PT) the complex responsible for glucose production in the terminal step of glycogenolysis and gluconeogenesis. Hence, it is the key enzyme in homeostatic regulation of blood glucose levels. The polypeptide is Glucose-6-phosphatase catalytic subunit 1 (G6pc1) (Mus musculus (Mouse)).